Reading from the N-terminus, the 398-residue chain is Secreted aspartic protease 2 (398 aa).

An N-terminal signal peptide occupies residues 1 to 18 (MFLKNIFIALAIALLVDA). A propeptide spans 19–56 (TPTTTKRSAGFVALDFSVVKTPKAFPVTNGQEGKTSKR) (activation peptide). The Peptidase A1 domain occupies 70 to 384 (YAADITVGSN…DLDDNEISLA (315 aa)). The active site involves Asp88. 88–90 (DTG) is a pepstatin A binding site. Cysteines 103 and 115 form a disulfide. 141–142 (GD) is a pepstatin A binding site. The Zn(2+) site is built by Asp247 and Asp270. Asp274 is a catalytic residue. 274 to 278 (DSGTT) serves as a coordination point for pepstatin A. A disulfide bridge connects residues Cys312 and Cys350. Asn313 and Asn321 each carry an N-linked (GlcNAc...) asparagine glycan.

Belongs to the peptidase A1 family. In terms of assembly, monomer.

It is found in the secreted. The enzyme catalyses Preferential cleavage at the carboxyl of hydrophobic amino acids, but fails to cleave 15-Leu-|-Tyr-16, 16-Tyr-|-Leu-17 and 24-Phe-|-Phe-25 of insulin B chain. Activates trypsinogen, and degrades keratin.. Its function is as follows. Secreted aspartic peptidases (SAPs) are a group of ten acidic hydrolases considered as key virulence factors. These enzymes supply the fungus with nutrient amino acids as well as are able to degrade the selected host's proteins involved in the immune defense. Induces host inflammatory cytokine production in a proteolytic activity-independent way. Plays a role in tissue damage during superficial infection. Moreover, acts toward human hemoglobin though limited proteolysis to generate a variety of antimicrobial hemocidins, enabling to compete with the other microorganisms of the same physiological niche using the microbicidal peptides generated from the host protein. In terms of biological role, plays a key role in defense against host by cleaving histatin-5 (Hst 5), a peptide from human saliva that carries out fungicidal activity. The cleavage rate decreases in an order of SAP2 &gt; SAP9 &gt; SAP3 &gt; SAP7 &gt; SAP4 &gt; SAP1 &gt; SAP8. The first cleavage occurs between residues 'Lys-17' and 'His-18' of Hst 5, giving DSHAKRHHGYKRKFHEK and HHSHRGY peptides. Simultaneously, the DSHAKRHHGYKRK peptide is also formed. Further fragmentation by SAP2 results in FHEK and DSHAKRHHGY products. The polypeptide is Secreted aspartic protease 2 (Candida albicans (Yeast)).